We begin with the raw amino-acid sequence, 746 residues long: NAD(P)H-quinone oxidoreductase subunit 5, chloroplastic (746 aa).

Helical transmembrane passes span 9-29 (WIIP…LLLV), 40-60 (WTFP…NLSI), 89-109 (IDPL…MVLI), 122-139 (LRFF…LGLV), 147-167 (IYIF…FWFT), 185-205 (GDFG…SFEF), 219-239 (NGVN…GAVA), 258-278 (TPIS…FLVA), 280-300 (LLPL…IGVI), 327-347 (LGYI…FHLI), 396-416 (TTFL…CFWS), 425-445 (WLYS…TAFY), 546-566 (LLPL…GIPF), 605-625 (IYSV…YGSI), and 722-742 (YLFV…FYFF).

Belongs to the complex I subunit 5 family. In terms of assembly, NDH is composed of at least 16 different subunits, 5 of which are encoded in the nucleus.

It localises to the plastid. The protein localises to the chloroplast thylakoid membrane. The enzyme catalyses a plastoquinone + NADH + (n+1) H(+)(in) = a plastoquinol + NAD(+) + n H(+)(out). It carries out the reaction a plastoquinone + NADPH + (n+1) H(+)(in) = a plastoquinol + NADP(+) + n H(+)(out). Its function is as follows. NDH shuttles electrons from NAD(P)H:plastoquinone, via FMN and iron-sulfur (Fe-S) centers, to quinones in the photosynthetic chain and possibly in a chloroplast respiratory chain. The immediate electron acceptor for the enzyme in this species is believed to be plastoquinone. Couples the redox reaction to proton translocation, and thus conserves the redox energy in a proton gradient. The protein is NAD(P)H-quinone oxidoreductase subunit 5, chloroplastic (ndhF) of Calycanthus floridus var. glaucus (Eastern sweetshrub).